A 576-amino-acid chain; its full sequence is Aspartate--tRNA ligase (576 aa).

Glu170 provides a ligand contact to L-aspartate. Positions 194–197 (QLFK) are aspartate. Arg216 is a binding site for L-aspartate. Residues 216-218 (RDE) and Gln225 contribute to the ATP site. Residue His438 participates in L-aspartate binding. Position 471 (Glu471) interacts with ATP. An L-aspartate-binding site is contributed by Arg478. 523–526 (GLDR) is a binding site for ATP.

It belongs to the class-II aminoacyl-tRNA synthetase family. Type 1 subfamily. Homodimer.

Its subcellular location is the cytoplasm. It carries out the reaction tRNA(Asp) + L-aspartate + ATP = L-aspartyl-tRNA(Asp) + AMP + diphosphate. Functionally, catalyzes the attachment of L-aspartate to tRNA(Asp) in a two-step reaction: L-aspartate is first activated by ATP to form Asp-AMP and then transferred to the acceptor end of tRNA(Asp). The sequence is that of Aspartate--tRNA ligase from Fervidobacterium nodosum (strain ATCC 35602 / DSM 5306 / Rt17-B1).